The chain runs to 241 residues: Uridylate kinase (241 aa).

ATP is bound at residue 12-15; the sequence is KLSG. Residues 20–25 form an involved in allosteric activation by GTP region; sequence GATGYG. G54 provides a ligand contact to UMP. ATP contacts are provided by G55 and R59. Residues D74 and 135–142 each bind UMP; that span reads TGNPYMTT. 3 residues coordinate ATP: N163, Y169, and D172.

The protein belongs to the UMP kinase family. In terms of assembly, homohexamer.

The protein localises to the cytoplasm. It catalyses the reaction UMP + ATP = UDP + ADP. The protein operates within pyrimidine metabolism; CTP biosynthesis via de novo pathway; UDP from UMP (UMPK route): step 1/1. With respect to regulation, allosterically activated by GTP. Inhibited by UTP. In terms of biological role, catalyzes the reversible phosphorylation of UMP to UDP. The protein is Uridylate kinase of Dehalococcoides mccartyi (strain CBDB1).